Reading from the N-terminus, the 316-residue chain is Ribosomal RNA large subunit methyltransferase F (316 aa).

This sequence belongs to the methyltransferase superfamily. METTL16/RlmF family.

The protein resides in the cytoplasm. The catalysed reaction is adenosine(1618) in 23S rRNA + S-adenosyl-L-methionine = N(6)-methyladenosine(1618) in 23S rRNA + S-adenosyl-L-homocysteine + H(+). Specifically methylates the adenine in position 1618 of 23S rRNA. This is Ribosomal RNA large subunit methyltransferase F from Pseudomonas putida (strain GB-1).